The chain runs to 539 residues: Phosphoenolpyruvate carboxykinase (ATP) (539 aa).

Residues R64, Y206, and K212 each contribute to the substrate site. ATP-binding positions include K212, H231, and 247 to 255 (GLSGTGKTT). Mn(2+) is bound by residues K212 and H231. D268 contributes to the Mn(2+) binding site. Residues E296, R332, 448–449 (RI), and T454 contribute to the ATP site. R332 lines the substrate pocket.

Belongs to the phosphoenolpyruvate carboxykinase (ATP) family. In terms of assembly, monomer. Requires Mn(2+) as cofactor.

Its subcellular location is the cytoplasm. The catalysed reaction is oxaloacetate + ATP = phosphoenolpyruvate + ADP + CO2. It participates in carbohydrate biosynthesis; gluconeogenesis. Involved in the gluconeogenesis. Catalyzes the conversion of oxaloacetate (OAA) to phosphoenolpyruvate (PEP) through direct phosphoryl transfer between the nucleoside triphosphate and OAA. In Yersinia pseudotuberculosis serotype IB (strain PB1/+), this protein is Phosphoenolpyruvate carboxykinase (ATP).